Reading from the N-terminus, the 1290-residue chain is Restriction of telomere capping protein 1 (1290 aa).

Composition is skewed to polar residues over residues 1–13 (MSRSQSPSLNDGL) and 36–48 (LSGNASFNGTSPK). Residues 1–87 (MSRSQSPSLN…RSNFRRANYV (87 aa)) form a disordered region. WD repeat units lie at residues 162–203 (RKTS…LVDG), 211–251 (KHTR…GRKN), 259–314 (SGSD…QAEK), 318–357 (AHSGPGLCLSWHPTLDYIMTGGRDGKCCLWNMGSKPLNPA), 397–444 (NTAH…IPKN), and 447–485 (TTNSPSCGFVWWNENLIFNIDKQNMVTGWDLGKEPTVLD). Residues 732–774 (EKDAAVENGTKVNEASIEKVTNSPNDTGSDELSSISKLSTEPK) form a disordered region. The segment covering 750 to 770 (KVTNSPNDTGSDELSSISKLS) has biased composition (polar residues). WD repeat units follow at residues 778–819 (LAER…FKIW) and 821–842 (MMRDSLLWELKQITDSLETDGG). 3 disordered regions span residues 856-924 (TRHS…TIDE), 960-984 (EDEEEDKFEEKSSAGTDASNKNIPI), and 1004-1034 (PKTLHGDFETDGSRMANSASTKRSSQPSFSS). Polar residues-rich tracts occupy residues 858 to 885 (HSNGARKQSMASDYSSFSTSEVGSTTGV), 896 to 907 (SLSTPPRATTSF), 972 to 981 (SAGTDASNKN), and 1018 to 1034 (MANSASTKRSSQPSFSS). WD repeat units lie at residues 1079 to 1119 (EGNN…KKIF) and 1166 to 1205 (LFEIAANLLKFCPWDDILEAGNGQCTVRIYCERCKKLLVN). The RING-type; degenerate zinc-finger motif lies at 1243-1285 (CVLCEQPLKKLTFCVLNCGHEGHPECFKKWFMNEEMSECPSGC).

This sequence belongs to the WD repeat RTC1 family.

Its subcellular location is the vacuole. Its function is as follows. May be involved in a process influencing telomere capping. The protein is Restriction of telomere capping protein 1 (RTC1) of Lachancea thermotolerans (strain ATCC 56472 / CBS 6340 / NRRL Y-8284) (Yeast).